Reading from the N-terminus, the 437-residue chain is Vasoactive intestinal polypeptide receptor 2 (437 aa).

The first 22 residues, 1 to 22 (MRASVVLTCYCWLLVRVSSIHP), serve as a signal peptide directing secretion. The Extracellular portion of the chain corresponds to 23–123 (ECRFHLEIQE…EDESKISFYI (101 aa)). Disulfide bonds link cysteine 37–cysteine 60, cysteine 51–cysteine 92, and cysteine 74–cysteine 108. Residues asparagine 57, asparagine 87, and asparagine 91 are each glycosylated (N-linked (GlcNAc...) asparagine). A helical membrane pass occupies residues 124 to 149 (LVKAIYTLGYSVSLMSLTTGSIIICL). The Cytoplasmic portion of the chain corresponds to 150–157 (FRKLHCTR). Residues 158–179 (NYIHLNLFLSFMLRAISVLVKD) traverse the membrane as a helical segment. Residues 180 to 202 (SVLYSSSGLLRCHDQPASWVGCK) lie on the Extracellular side of the membrane. Residues cysteine 201 and cysteine 270 are joined by a disulfide bond. A helical membrane pass occupies residues 203-227 (LSLVFFQYCIMANFYWLLVEGLYLH). Residues 228–238 (TLLVAILPPSR) are Cytoplasmic-facing. A helical membrane pass occupies residues 239-260 (CFLAYLLIGWGIPSVCIGAWTA). Residues 261 to 279 (TRLSLEDTGCWDTNDHSIP) lie on the Extracellular side of the membrane. Residues 280 to 303 (WWVIRMPILISIVVNFALFISIVR) form a helical membrane-spanning segment. Residues 304–324 (ILLQKLTSPDVGGNDQSQYKR) lie on the Cytoplasmic side of the membrane. A helical transmembrane segment spans residues 325–345 (LAKSTLLLIPLFGVHYMVFAA). Over 346-353 (FPIGISST) the chain is Extracellular. Residues 354 to 377 (YQILFELCVGSFQGLVVAVLYCFL) traverse the membrane as a helical segment. The Cytoplasmic segment spans residues 378–437 (NSEVQCELKRRWRGLCLTQAGSRDYRLHSWSMSRNGSESALQIHRGSRTQSFLQSETSVI).

The protein belongs to the G-protein coupled receptor 2 family. Interacts with ADCYAP1/PACAP (via N-terminal extracellular domain); activated by PACAP27 and CAPAC38 neuropeptides. Interacts with VIP; the interaction results in VIPR1 activation. In terms of tissue distribution, expressed at high levels in the MIN6 cells, at moderate levels in pancreatic islets, insulin-secreting cells, lung, brain, stomach, and colon, and at low levels in the heart.

Its subcellular location is the cell membrane. Functionally, g protein-coupled receptor activated by the neuropeptides vasoactive intestinal peptide (VIP) and pituitary adenylate cyclase-activating polypeptide (ADCYAP1/PACAP). Binds VIP and both PACAP27 and PACAP38 bioactive peptides with the order of ligand affinity of VIP = PACAP38 &gt; PACAP27. Ligand binding causes a conformation change that triggers signaling via guanine nucleotide-binding proteins (G proteins) and modulates the activity of downstream effectors. Activates cAMP-dependent pathway. May be coupled to phospholipase C. This chain is Vasoactive intestinal polypeptide receptor 2, found in Mus musculus (Mouse).